The chain runs to 355 residues: Peptide chain release factor 1 (355 aa).

Glutamine 231 is modified (N5-methylglutamine).

Belongs to the prokaryotic/mitochondrial release factor family. In terms of processing, methylated by PrmC. Methylation increases the termination efficiency of RF1.

It localises to the cytoplasm. Functionally, peptide chain release factor 1 directs the termination of translation in response to the peptide chain termination codons UAG and UAA. The protein is Peptide chain release factor 1 of Sulfurovum sp. (strain NBC37-1).